Reading from the N-terminus, the 205-residue chain is Holliday junction branch migration complex subunit RuvA (205 aa).

The segment at 1-64 is domain I; it reads MIGRLKGILI…ENLHQLFGFA (64 aa). Residues 65–143 form a domain II region; it reads EQRDRSLFRT…NWDLPQGDML (79 aa). The interval 144–153 is flexible linker; it reads AHGEIQAIAS. The domain III stretch occupies residues 153–205; that stretch reads SDNDIYAEAESALIALGYKPVDAAKMVASAAKQKPEARSEELIRIALRSLAGV.

Belongs to the RuvA family. Homotetramer. Forms an RuvA(8)-RuvB(12)-Holliday junction (HJ) complex. HJ DNA is sandwiched between 2 RuvA tetramers; dsDNA enters through RuvA and exits via RuvB. An RuvB hexamer assembles on each DNA strand where it exits the tetramer. Each RuvB hexamer is contacted by two RuvA subunits (via domain III) on 2 adjacent RuvB subunits; this complex drives branch migration. In the full resolvosome a probable DNA-RuvA(4)-RuvB(12)-RuvC(2) complex forms which resolves the HJ.

Its subcellular location is the cytoplasm. The RuvA-RuvB-RuvC complex processes Holliday junction (HJ) DNA during genetic recombination and DNA repair, while the RuvA-RuvB complex plays an important role in the rescue of blocked DNA replication forks via replication fork reversal (RFR). RuvA specifically binds to HJ cruciform DNA, conferring on it an open structure. The RuvB hexamer acts as an ATP-dependent pump, pulling dsDNA into and through the RuvAB complex. HJ branch migration allows RuvC to scan DNA until it finds its consensus sequence, where it cleaves and resolves the cruciform DNA. In Cellvibrio japonicus (strain Ueda107) (Pseudomonas fluorescens subsp. cellulosa), this protein is Holliday junction branch migration complex subunit RuvA.